The sequence spans 112 residues: Protein ECM19 (112 aa).

The helical transmembrane segment at 35–57 (NTLDMVTIGIACLVGVYTGTRFF) threads the bilayer. Residues 82 to 112 (EDGNLLKVTPSLSSTPAAPPTPPTPPTPPQQ) form a disordered region. The segment covering 98–112 (AAPPTPPTPPTPPQQ) has biased composition (pro residues).

It is found in the mitochondrion membrane. Its function is as follows. May be involved in cell wall organization and biogenesis. The protein is Protein ECM19 (ECM19) of Saccharomyces cerevisiae (strain ATCC 204508 / S288c) (Baker's yeast).